Reading from the N-terminus, the 419-residue chain is Maltoporin 2 (419 aa).

An N-terminal signal peptide occupies residues 1 to 23 (MKTSLRTLSVALAAALVSPSVLA).

Belongs to the porin LamB (TC 1.B.3) family. Homotrimer formed of three 18-stranded antiparallel beta-barrels, containing three independent channels.

It localises to the cell outer membrane. It catalyses the reaction beta-maltose(in) = beta-maltose(out). Its function is as follows. Involved in the transport of maltose and maltodextrins. The chain is Maltoporin 2 from Yersinia pseudotuberculosis serotype O:1b (strain IP 31758).